The sequence spans 339 residues: Dual specificity protein phosphatase 12 (339 aa).

Met-1 is subject to N-acetylmethionine. The disordered stretch occupies residues 1 to 25; the sequence is MLEAQGSNHGCERQAPTASPASSAG. Positions 26 to 170 constitute a Tyrosine-protein phosphatase domain; it reads HAVEVRPGLY…LKLYEAMGYE (145 aa). The active-site Phosphocysteine intermediate is Cys-114. 115 to 120 contributes to the substrate binding site; it reads HAGVSR. Residue Ser-334 is modified to Phosphoserine.

Belongs to the protein-tyrosine phosphatase family. Non-receptor class dual specificity subfamily. As to quaternary structure, monomer. Requires Zn(2+) as cofactor.

The protein resides in the nucleus. It localises to the cytoplasm. It is found in the cytosol. The enzyme catalyses O-phospho-L-tyrosyl-[protein] + H2O = L-tyrosyl-[protein] + phosphate. It carries out the reaction O-phospho-L-seryl-[protein] + H2O = L-seryl-[protein] + phosphate. The catalysed reaction is O-phospho-L-threonyl-[protein] + H2O = L-threonyl-[protein] + phosphate. Its function is as follows. Dual specificity phosphatase; can dephosphorylate both phosphotyrosine and phosphoserine or phosphothreonine residues. Can dephosphorylate glucokinase (in vitro). Has phosphatase activity with the synthetic substrate 6,8-difluoro-4-methylumbelliferyl phosphate and other in vitro substrates. The polypeptide is Dual specificity protein phosphatase 12 (Dusp12) (Mus musculus (Mouse)).